We begin with the raw amino-acid sequence, 593 residues long: Thiol:disulfide interchange protein DsbD (593 aa).

An N-terminal signal peptide occupies residues 1–21; sequence MRALLTFFVAGLLVLSSPAMA. Disulfide bonds link Cys130–Cys136 and Cys207–Cys328. The next 8 membrane-spanning stretches (helical) occupy residues 193-215, 235-257, 269-291, 318-340, 347-369, 384-401, 408-425, and 440-462; these read LLFLALGVGLAFTPCVLPMYPIL, LVYVQGMALTYTLLGLVVASAGL, LIGLSILFVTLALSMFGVYTLQL, GAISGLVCSPCTTAPLSGALLYV, LTGGVALYALAMGMGIPLILVAV, RVKTLFGFVLLAAPIFLL, MWSTALWSALGIAAFGWL, and SAVGIIAVLGLFASAQPALNYWF. The region spanning 451-593 is the Thioredoxin domain; the sequence is FASAQPALNY…FLEHIQRISN (143 aa). Residues Cys508 and Cys511 are joined by a disulfide bond.

It belongs to the thioredoxin family. DsbD subfamily.

It is found in the cell inner membrane. The catalysed reaction is [protein]-dithiol + NAD(+) = [protein]-disulfide + NADH + H(+). The enzyme catalyses [protein]-dithiol + NADP(+) = [protein]-disulfide + NADPH + H(+). Its function is as follows. Required to facilitate the formation of correct disulfide bonds in some periplasmic proteins and for the assembly of the periplasmic c-type cytochromes. Acts by transferring electrons from cytoplasmic thioredoxin to the periplasm. This transfer involves a cascade of disulfide bond formation and reduction steps. The protein is Thiol:disulfide interchange protein DsbD of Vibrio vulnificus (strain CMCP6).